A 312-amino-acid chain; its full sequence is MELVGWLVDKGITSEKQWIQEDQASYISFNAASNSRSQIKAALDNAGKIMSLTKTAPDYLVGQQPVEDISSNRIYKILELNGYDPQYAASVFLGWATKKFGKRNTIWLFGPATTGKTNIAEAIAHTVPFYGCVNWTNENFPFNDCVDKMVIWWEEGKMTAKVVESAKAILGGSKVRVDQKCKSSAQIDPTPVIVTSNTNMCAVIDGNSTTFEHQQPLQDRMFKFELTRRLDHDFGKVTKQEVKDFFRWAKDHVVEVEHEFYVKKGGAKKRPAPSDADISEPKRVRESVAQPSTSDAEASINYADRLARGHSL.

One can recognise an SF3 helicase domain in the interval 84–239 (DPQYAASVFL…LDHDFGKVTK (156 aa)). 110-117 (GPATTGKT) is a binding site for ATP. The disordered stretch occupies residues 264–301 (KGGAKKRPAPSDADISEPKRVRESVAQPSTSDAEASIN).

As to quaternary structure, homooligomer.

The protein resides in the host nucleus. It catalyses the reaction ATP + H2O = ADP + phosphate + H(+). Plays a critical role during packaging of viral DNA into empty capsids, where they are thought to be part of the packaging motor complex. The single stranded genomic DNA is packaged in a 3' to 5' direction and requires the association of viral DNA with Rep40. The polypeptide is Protein Rep40 (Rep40) (Mammalia (AAV-2)).